The chain runs to 206 residues: Thymidylate kinase (206 aa).

11–18 (GIDGAGKT) serves as a coordination point for ATP.

The protein belongs to the thymidylate kinase family.

It carries out the reaction dTMP + ATP = dTDP + ADP. Functionally, phosphorylation of dTMP to form dTDP in both de novo and salvage pathways of dTTP synthesis. The chain is Thymidylate kinase from Burkholderia lata (strain ATCC 17760 / DSM 23089 / LMG 22485 / NCIMB 9086 / R18194 / 383).